Consider the following 237-residue polypeptide: HTH-type transcriptional regulator GmuR (237 aa).

The HTH gntR-type domain maps to 1-69; the sequence is MNKYEIIANE…RGHGTFIIQS (69 aa). Residues 29-48 constitute a DNA-binding region (H-T-H motif); that stretch reads EVSLAKEFNSSRMTMKRALD.

The protein resides in the cytoplasm. Transcriptional repressor of the gmuBACDREFG operon which is involved in the uptake and degradation of glucomannan. The polypeptide is HTH-type transcriptional regulator GmuR (gmuR) (Bacillus subtilis (strain 168)).